Reading from the N-terminus, the 479-residue chain is Arf-GAP domain and FG repeat-containing protein 2 (479 aa).

The Arf-GAP domain occupies Glu27–Gly153. The C4-type zinc-finger motif lies at Cys47–Cys70. Disordered regions lie at residues Gln150 to Ala223 and Leu450 to Leu479. The span at Ser157–Gln167 shows a compositional bias: polar residues. Residue Lys174 is modified to N6-acetyllysine. A compositionally biased stretch (low complexity) spans Ser194–Ser218. Positions Ala454–Leu479 are enriched in polar residues.

In terms of assembly, interacts with EPS15R.

The chain is Arf-GAP domain and FG repeat-containing protein 2 (Agfg2) from Mus musculus (Mouse).